The chain runs to 98 residues: Large ribosomal subunit protein bL21 (98 aa).

Belongs to the bacterial ribosomal protein bL21 family. Part of the 50S ribosomal subunit. Contacts protein L20.

Its function is as follows. This protein binds to 23S rRNA in the presence of protein L20. This is Large ribosomal subunit protein bL21 from Chloroherpeton thalassium (strain ATCC 35110 / GB-78).